A 414-amino-acid chain; its full sequence is Tryptophan synthase beta chain (414 aa).

Lys-109 bears the N6-(pyridoxal phosphate)lysine mark.

It belongs to the TrpB family. As to quaternary structure, tetramer of two alpha and two beta chains. Pyridoxal 5'-phosphate serves as cofactor.

It carries out the reaction (1S,2R)-1-C-(indol-3-yl)glycerol 3-phosphate + L-serine = D-glyceraldehyde 3-phosphate + L-tryptophan + H2O. It functions in the pathway amino-acid biosynthesis; L-tryptophan biosynthesis; L-tryptophan from chorismate: step 5/5. Its function is as follows. The beta subunit is responsible for the synthesis of L-tryptophan from indole and L-serine. The polypeptide is Tryptophan synthase beta chain (Prochlorococcus marinus (strain AS9601)).